The sequence spans 409 residues: Serine/threonine transporter SstT (409 aa).

9 helical membrane passes run 17–37 (LVVQ…FFPA), 49–69 (FVSA…MASI), 83–103 (ILLL…IASF), 142–162 (ALIS…GIAF), 180–200 (VSLI…GLVA), 218–238 (LVVL…LIVF), 299–319 (MAGA…TLGI), 331–351 (VVAS…LLLI), and 357–377 (LFGI…IIAI).

It belongs to the dicarboxylate/amino acid:cation symporter (DAACS) (TC 2.A.23) family.

It is found in the cell inner membrane. It catalyses the reaction L-serine(in) + Na(+)(in) = L-serine(out) + Na(+)(out). The enzyme catalyses L-threonine(in) + Na(+)(in) = L-threonine(out) + Na(+)(out). Functionally, involved in the import of serine and threonine into the cell, with the concomitant import of sodium (symport system). In Pseudomonas paraeruginosa (strain DSM 24068 / PA7) (Pseudomonas aeruginosa (strain PA7)), this protein is Serine/threonine transporter SstT.